The following is a 425-amino-acid chain: Xyloglucan O-acetyltransferase 2 (425 aa).

The Cytoplasmic portion of the chain corresponds to 1–18 (MGSPFKDHHTLHPSLVRK). A helical; Signal-anchor for type II membrane protein transmembrane segment spans residues 19-38 (LIPWTFYAMVPLVLFRVYLY). The Lumenal portion of the chain corresponds to 39 to 425 (PYPLHHTTTT…KWEYASRREQ (387 aa)). 4 disulfides stabilise this stretch: cysteine 68–cysteine 118, cysteine 89–cysteine 154, cysteine 98–cysteine 398, and cysteine 313–cysteine 394. A glycan (N-linked (GlcNAc...) asparagine) is linked at asparagine 85. The short motif at 141 to 143 (GDS) is the GDS motif element. Serine 143 functions as the Nucleophile in the catalytic mechanism. N-linked (GlcNAc...) asparagine glycosylation is found at asparagine 183 and asparagine 259. Aspartate 393 (proton donor) is an active-site residue. The DXXH motif motif lies at 393–396 (DCVH). Histidine 396 serves as the catalytic Proton acceptor.

This sequence belongs to the PC-esterase family. TBL subfamily.

It localises to the golgi apparatus membrane. Functionally, xyloglucan acetyltransferase that catalyzes the acetylation of fucosylated Gal residues on xyloglucan side chains. Predominantly catalyze 6-O-monoacetylation of Gal residues in the Fuc-Gal-Xyl trisaccharide side chains of xyloglucan oligomers. This is Xyloglucan O-acetyltransferase 2 from Populus trichocarpa (Western balsam poplar).